The chain runs to 510 residues: Glycosyl hydrolase YngK (510 aa).

A signal peptide spans 1–30; the sequence is MKVCQKSIVRFLVSLIIGTFVISVPFMANA.

The protein belongs to the glycosyl hydrolase-like 10 (GHL10) family.

In Bacillus subtilis (strain 168), this protein is Glycosyl hydrolase YngK (yngK).